Consider the following 61-residue polypeptide: Large ribosomal subunit protein uL30 (61 aa).

Belongs to the universal ribosomal protein uL30 family. As to quaternary structure, part of the 50S ribosomal subunit.

The chain is Large ribosomal subunit protein uL30 from Chlorobium luteolum (strain DSM 273 / BCRC 81028 / 2530) (Pelodictyon luteolum).